The primary structure comprises 392 residues: Cyclic AMP receptor 1 (392 aa).

The Extracellular segment spans residues 1–13 (MGLLDGNPANETS). An N-linked (GlcNAc...) asparagine glycan is attached at N10. The helical transmembrane segment at 14 to 33 (LVLLLFADFSSMLGCMAVLI) threads the bilayer. Residues 34 to 47 (GFWRLKLLRNHVTK) are Cytoplasmic-facing. Residues 48–68 (VIACFCATSFCKDFPSTILTL) form a helical membrane-spanning segment. The Extracellular segment spans residues 69–83 (TNTAVNGGFPCYLYA). The helical transmembrane segment at 84–109 (IVITYGSFACWLWTLCLAISIYMLIV) threads the bilayer. At 110-120 (KREPEPERFEK) the chain is on the cytoplasmic side. Residues 121 to 139 (YYYLLCWGLPLISTIVMLA) traverse the membrane as a helical segment. The Extracellular portion of the chain corresponds to 140–162 (KNTVQFVGNWCWIGVSFTGYRFG). Residues 163–181 (LFYGPFLFIWAISAVLVGL) form a helical membrane-spanning segment. The Cytoplasmic segment spans residues 182–205 (TSRYTYVVIHNGVSDNKEKHLTYQ). The helical transmembrane segment at 206–224 (FKLINYIIVFLVCWVFAVV) threads the bilayer. Residues 225 to 235 (NRIVNGLNMFP) lie on the Extracellular side of the membrane. A helical transmembrane segment spans residues 236 to 260 (PALNILHTYLSVSHGFWASVTFIYN). Residues 261 to 392 (NPLMWRYFGA…STSTNGQGNN (132 aa)) are Cytoplasmic-facing. Disordered regions lie at residues 292-324 (NKNN…VQCS) and 339-392 (VNNQ…QGNN). Over residues 298-310 (PSPYSSSRGTSGK) the composition is skewed to polar residues. A phosphoserine mark is found at S299, S302, S303, S304, S308, S360, S361, S362, S363, S364, S366, S367, and S368. Low complexity predominate over residues 340 to 367 (NNQQNLNNNYGLQQNYNDEGSSSSSLSS). The segment covering 375–392 (VEMQNIQISTSTNGQGNN) has biased composition (polar residues).

This sequence belongs to the G-protein coupled receptor 5 family. In terms of processing, C-terminal Ser or Thr residues may be phosphorylated.

It localises to the membrane. Its function is as follows. Receptor for cAMP. Coordinates the aggregation of individual cells into a multicellular organism and regulates the expression of a large number of developmentally regulated genes. The activity of this receptor is mediated by G proteins. The chain is Cyclic AMP receptor 1 (carA-1) from Dictyostelium discoideum (Social amoeba).